A 133-amino-acid polypeptide reads, in one-letter code: Phosphoribosyl-AMP cyclohydrolase (133 aa).

Asp82 contacts Mg(2+). Zn(2+) is bound at residue Cys83. 2 residues coordinate Mg(2+): Asp84 and Asp86. Residues Cys100 and Cys107 each coordinate Zn(2+).

The protein belongs to the PRA-CH family. As to quaternary structure, homodimer. It depends on Mg(2+) as a cofactor. Zn(2+) is required as a cofactor.

It localises to the cytoplasm. It carries out the reaction 1-(5-phospho-beta-D-ribosyl)-5'-AMP + H2O = 1-(5-phospho-beta-D-ribosyl)-5-[(5-phospho-beta-D-ribosylamino)methylideneamino]imidazole-4-carboxamide. It participates in amino-acid biosynthesis; L-histidine biosynthesis; L-histidine from 5-phospho-alpha-D-ribose 1-diphosphate: step 3/9. In terms of biological role, catalyzes the hydrolysis of the adenine ring of phosphoribosyl-AMP. This Aromatoleum aromaticum (strain DSM 19018 / LMG 30748 / EbN1) (Azoarcus sp. (strain EbN1)) protein is Phosphoribosyl-AMP cyclohydrolase.